Here is a 195-residue protein sequence, read N- to C-terminus: Imidazoleglycerol-phosphate dehydratase (195 aa).

This sequence belongs to the imidazoleglycerol-phosphate dehydratase family.

It localises to the cytoplasm. The enzyme catalyses D-erythro-1-(imidazol-4-yl)glycerol 3-phosphate = 3-(imidazol-4-yl)-2-oxopropyl phosphate + H2O. Its pathway is amino-acid biosynthesis; L-histidine biosynthesis; L-histidine from 5-phospho-alpha-D-ribose 1-diphosphate: step 6/9. The polypeptide is Imidazoleglycerol-phosphate dehydratase (Burkholderia lata (strain ATCC 17760 / DSM 23089 / LMG 22485 / NCIMB 9086 / R18194 / 383)).